Consider the following 152-residue polypeptide: Diamine acetyltransferase (152 aa).

Residues 5-152 (FEVRKATIDD…SFLDLTPKSD (148 aa)) form the N-acetyltransferase domain. Tyrosine 127 acts as the Proton donor in catalysis.

This sequence belongs to the acetyltransferase family. Homotetramer.

Its subcellular location is the cytoplasm. It carries out the reaction an alkane-alpha,omega-diamine + acetyl-CoA = an N-acetylalkane-alpha,omega-diamine + CoA + H(+). It participates in amine and polyamine degradation; putrescine degradation; N-acetylputrescine from putrescine: step 1/1. Its function is as follows. Enzyme which catalyzes the acetylation of polyamines. Displays higher substrate specificity for spermine than for spermidine. May function to acetylate host-derived polyamines, thus alleviating the necessity for de novo synthesis of these molecules. This chain is Diamine acetyltransferase, found in Cryptosporidium parvum (strain Iowa II).